A 522-amino-acid polypeptide reads, in one-letter code: Zinc finger protein STOP1 homolog (522 aa).

Composition is skewed to polar residues over residues 1 to 12 (MDSGLGRSSETS) and 19 to 40 (MASN…SSMD). Disordered regions lie at residues 1–43 (MDSG…DQPP) and 234–260 (CGGE…EREN). The segment covering 244–260 (MEDHDVKESDDGGEREN) has biased composition (basic and acidic residues). The segment at 282 to 304 (HFCLICGKGFKRDANLRMHMRGH) adopts a C2H2-type 1 zinc-finger fold. Residues 390-421 (KHCGRDKWLCSCGTTFSRKDKLFGHVALFQGH) form a C2H2-type 2; atypical zinc finger.

The protein resides in the nucleus. Functionally, probable transcription factor that may be involved in aluminum tolerance. This Oryza sativa subsp. japonica (Rice) protein is Zinc finger protein STOP1 homolog.